A 217-amino-acid polypeptide reads, in one-letter code: Somatotropin (217 aa).

A signal peptide spans 1–26; the sequence is MAPGSRTSLLLAFGLLCLPWLQEGSA. Histidine 44 serves as a coordination point for Zn(2+). Residues cysteine 79 and cysteine 191 are joined by a disulfide bond. Phosphoserine is present on serine 132. Residue glutamate 200 participates in Zn(2+) binding. Cysteine 208 and cysteine 215 are joined by a disulfide.

It belongs to the somatotropin/prolactin family.

The protein resides in the secreted. Plays an important role in growth control. Its major role in stimulating body growth is to stimulate the liver and other tissues to secrete IGF1. It stimulates both the differentiation and proliferation of myoblasts. It also stimulates amino acid uptake and protein synthesis in muscle and other tissues. The sequence is that of Somatotropin (GH1) from Pan troglodytes (Chimpanzee).